The primary structure comprises 473 residues: Mannose-1-phosphate guanylyltransferase (473 aa).

The protein belongs to the mannose-6-phosphate isomerase type 2 family. Homodimer.

It catalyses the reaction alpha-D-mannose 1-phosphate + GTP + H(+) = GDP-alpha-D-mannose + diphosphate. Its pathway is nucleotide-sugar biosynthesis; GDP-alpha-D-mannose biosynthesis; GDP-alpha-D-mannose from alpha-D-mannose 1-phosphate (GTP route): step 1/1. It participates in bacterial outer membrane biogenesis; LPS O-antigen biosynthesis. In terms of biological role, involved in GDP-mannose biosynthesis which serves as the activated sugar nucleotide precursor for mannose residues in cell surface polysaccharides. This enzyme participates in synthesis of the LPS group C2 O antigen. The sequence is that of Mannose-1-phosphate guanylyltransferase (rfbM) from Salmonella muenchen.